Reading from the N-terminus, the 450-residue chain is Acyltransferase GLAUCE (450 aa).

Active-site proton acceptor residues include histidine 171 and glutamate 394.

Belongs to the plant acyltransferase family. In terms of tissue distribution, restricted to the central cells of embryo sacs.

It is found in the cytoplasm. It localises to the nucleus. Its function is as follows. Required for double fertilization of the egg cell and the central cell by two sperm cells, resulting in the formation of the embryo and the endosperm. Involved in the regulation of embryonic expression of PHE1. Essential in maternal tissues to ensure the paternal embryonic expression of several genes, including RPS5a and FAC1, both of which being essential for early embryo and endosperm development in fertilized seeds. The protein is Acyltransferase GLAUCE of Arabidopsis thaliana (Mouse-ear cress).